The following is a 117-amino-acid chain: MDKKSARIRRATRARRKLQELGATRLVVHRTPRHIYAQVIAPNGSEVLVAASTVEKAIAEQLKYTGNKDAAAAVGKAVAERALEKGIKDVSFDRSGFQYHGRVQALADAAREAGLQF.

Belongs to the universal ribosomal protein uL18 family. As to quaternary structure, part of the 50S ribosomal subunit; part of the 5S rRNA/L5/L18/L25 subcomplex. Contacts the 5S and 23S rRNAs.

In terms of biological role, this is one of the proteins that bind and probably mediate the attachment of the 5S RNA into the large ribosomal subunit, where it forms part of the central protuberance. This chain is Large ribosomal subunit protein uL18, found in Klebsiella pneumoniae subsp. pneumoniae (strain ATCC 700721 / MGH 78578).